The following is an 85-amino-acid chain: U4-theraphotoxin-Hhn1j (85 aa).

The N-terminal stretch at 1 to 22 (MKVTLIAILTCAAVLVLHTTAA) is a signal peptide. The propeptide occupies 23–48 (EELEAESQLMEVGMPDTELAAVDEER). Intrachain disulfides connect Cys52/Cys66, Cys56/Cys77, and Cys71/Cys82.

The protein belongs to the neurotoxin 12 (Hwtx-2) family. 02 (Hwtx-2) subfamily. As to expression, expressed by the venom gland.

It is found in the secreted. Postsynaptic neurotoxin. The sequence is that of U4-theraphotoxin-Hhn1j from Cyriopagopus hainanus (Chinese bird spider).